A 490-amino-acid polypeptide reads, in one-letter code: GTPase Der (490 aa).

EngA-type G domains are found at residues Pro-3 to Leu-166 and Ile-203 to Thr-376. Residues Gly-9–Ser-16, Asp-56–Ile-60, Asn-118–Asp-121, Gly-209–Ser-216, Asp-256–Val-260, and Asn-321–Asp-324 contribute to the GTP site. The 85-residue stretch at Arg-377–Glu-461 folds into the KH-like domain.

It belongs to the TRAFAC class TrmE-Era-EngA-EngB-Septin-like GTPase superfamily. EngA (Der) GTPase family. As to quaternary structure, associates with the 50S ribosomal subunit.

GTPase that plays an essential role in the late steps of ribosome biogenesis. The protein is GTPase Der of Escherichia coli O81 (strain ED1a).